The sequence spans 194 residues: FK506-binding protein 3 (194 aa).

The first 19 residues, 1–19, serve as a signal peptide directing secretion; it reads MNKFLIALLVLATLAVSFS. The PPIase FKBP-type domain occupies 44 to 133; that stretch reads GDYISLKYVG…YFDLEVVSIE (90 aa). A helical membrane pass occupies residues 148-168; it reads VGTIIAFSMLAGFIVLVKFII. Residues 173–194 are disordered; the sequence is DESNSKKPAPGKPKKTKAAKQN. The segment covering 184–194 has biased composition (basic residues); that stretch reads KPKKTKAAKQN.

Belongs to the FKBP-type PPIase family.

The protein localises to the membrane. It catalyses the reaction [protein]-peptidylproline (omega=180) = [protein]-peptidylproline (omega=0). Its activity is regulated as follows. Inhibited by both FK506 and rapamycin. Its function is as follows. PPIases accelerate the folding of proteins by catalyzing the cis-trans isomerization of proline imidic peptide bonds in oligopeptides. The protein is FK506-binding protein 3 (fkbp3) of Dictyostelium discoideum (Social amoeba).